We begin with the raw amino-acid sequence, 227 residues long: Cytochrome c oxidase subunit 2 (227 aa).

At 1-14 (MPYPLQLGLQDATS) the chain is on the mitochondrial intermembrane side. Residues 15–45 (PIMEELTHFHDHTLMIVFLISSLVLYIISSM) form a helical membrane-spanning segment. Residues 46 to 59 (LTTKLTHTSTMDAQ) are Mitochondrial matrix-facing. A helical membrane pass occupies residues 60-87 (EVETIWTILPAMILILIALPSLRILYMM). Residues 88–227 (DEINDPSLTV…YFEDWSASLL (140 aa)) are Mitochondrial intermembrane-facing. Cu cation-binding residues include histidine 161, cysteine 196, glutamate 198, cysteine 200, histidine 204, and methionine 207. Glutamate 198 is a binding site for Mg(2+).

This sequence belongs to the cytochrome c oxidase subunit 2 family. Component of the cytochrome c oxidase (complex IV, CIV), a multisubunit enzyme composed of 14 subunits. The complex is composed of a catalytic core of 3 subunits MT-CO1, MT-CO2 and MT-CO3, encoded in the mitochondrial DNA, and 11 supernumerary subunits COX4I, COX5A, COX5B, COX6A, COX6B, COX6C, COX7A, COX7B, COX7C, COX8 and NDUFA4, which are encoded in the nuclear genome. The complex exists as a monomer or a dimer and forms supercomplexes (SCs) in the inner mitochondrial membrane with NADH-ubiquinone oxidoreductase (complex I, CI) and ubiquinol-cytochrome c oxidoreductase (cytochrome b-c1 complex, complex III, CIII), resulting in different assemblies (supercomplex SCI(1)III(2)IV(1) and megacomplex MCI(2)III(2)IV(2)). Found in a complex with TMEM177, COA6, COX18, COX20, SCO1 and SCO2. Interacts with TMEM177 in a COX20-dependent manner. Interacts with COX20. Interacts with COX16. Cu cation serves as cofactor.

It localises to the mitochondrion inner membrane. The enzyme catalyses 4 Fe(II)-[cytochrome c] + O2 + 8 H(+)(in) = 4 Fe(III)-[cytochrome c] + 2 H2O + 4 H(+)(out). Its function is as follows. Component of the cytochrome c oxidase, the last enzyme in the mitochondrial electron transport chain which drives oxidative phosphorylation. The respiratory chain contains 3 multisubunit complexes succinate dehydrogenase (complex II, CII), ubiquinol-cytochrome c oxidoreductase (cytochrome b-c1 complex, complex III, CIII) and cytochrome c oxidase (complex IV, CIV), that cooperate to transfer electrons derived from NADH and succinate to molecular oxygen, creating an electrochemical gradient over the inner membrane that drives transmembrane transport and the ATP synthase. Cytochrome c oxidase is the component of the respiratory chain that catalyzes the reduction of oxygen to water. Electrons originating from reduced cytochrome c in the intermembrane space (IMS) are transferred via the dinuclear copper A center (CU(A)) of subunit 2 and heme A of subunit 1 to the active site in subunit 1, a binuclear center (BNC) formed by heme A3 and copper B (CU(B)). The BNC reduces molecular oxygen to 2 water molecules using 4 electrons from cytochrome c in the IMS and 4 protons from the mitochondrial matrix. This Dugong dugon (Dugong) protein is Cytochrome c oxidase subunit 2 (MT-CO2).